The following is a 669-amino-acid chain: MTKRTSFNPLVIGVTLFFILLLMAMIFIAPEQTQALLNQAKSGIFANFSWFYVLTFSVFLGFLLILSVSSLGNIKLGQDEEEPEFSFLSWLAMLFAAGMGVGLMFFGVAEPLTHYLSDITAGSAEHKQQEALLHTLFHWGIHAWAVYGTIALALAYFGFRYKLPLALRSCFYPLLKDRINGKIGDAIDVMALLATLFGIITTLGFGSSQLGAGLEQIGWISQNSFALQVGVIVVVMCLAVFSAISGVGKGVKILSEINLTLAFCLLLFVLISGPTLYLLSAFSDNIGNYFSNLVQLSFKTYAYEQEHTSWFSGWTVLYWAWWCSWAPFVGLFIARISKGRTIREFIFGVLVIPSLFGILWFTVFGNTAVWLNDGIAAGGLGEFISSPEILLFKFLNYLPLPTITGFVSLLVILLFFITSADSGIYVLNNIASRDKSLASPAWQAIMWGTLMSVVAIVLMQSGGLANLQTMTLIVALPFALLMLVMCFSLWKGLIADKKYFSTKVNPTSIFWSGDKWKSHLEQMMNQTQEKDILRFLKNTALPAMRELRQELTGKYNLSVEINTLFEQEEPALELVIHKESMRDFMYGIKSVGREVSEQLINDENLPHIQHSATYEPYTYFFDGRVGYDVQYMDQDELIADMLKQYERYLSLLDDVGQELMAHEQTELAE.

12 consecutive transmembrane segments (helical) span residues 9-29, 48-68, 87-107, 139-159, 186-206, 224-244, 259-279, 314-334, 345-365, 397-417, 444-464, and 470-490; these read PLVI…IFIA, FSWF…ILSV, FLSW…MFFG, WGIH…YFGF, AIDV…LGFG, SFAL…FSAI, LTLA…LYLL, WTVL…LFIA, FIFG…TVFG, YLPL…LFFI, AIMW…SGGL, and MTLI…FSLW.

The protein belongs to the BCCT transporter (TC 2.A.15) family.

The protein localises to the cell inner membrane. This is an uncharacterized protein from Haemophilus influenzae (strain ATCC 51907 / DSM 11121 / KW20 / Rd).